The following is a 491-amino-acid chain: 4,4'-diapolycopen-4-al dehydrogenase (491 aa).

Glu208 is an active-site residue.

It belongs to the carotenoid/retinoid oxidoreductase family. CrtN subfamily.

It carries out the reaction all-trans-4,4'-diapolycopen-4-al + A + H2O = all-trans-4,4'-diapolycopen-4-oate + AH2 + H(+). The protein operates within carotenoid biosynthesis. Its function is as follows. Involved in the biosynthesis of the major C30 carotenoid methyl 4'-[6-O-(acylglycosyl)oxy]-4,4'-diapolycopen-4-oic acid via 4,4'-diapolycopen-4-oic acid intermediate. Catalyzes the oxidation of 4,4'-diapolycopen-4-al to yield 4,4'-diapolycopen-4-oic acid. The chain is 4,4'-diapolycopen-4-al dehydrogenase from Metabacillus indicus (Bacillus indicus).